The primary structure comprises 490 residues: Betaine aldehyde dehydrogenase (490 aa).

Positions 26 and 93 each coordinate K(+). Position 150-152 (150-152 (GAW)) interacts with NAD(+). The active-site Charge relay system is the lysine 162. An NAD(+)-binding site is contributed by 176–179 (KPSE). Valine 180 is a binding site for K(+). An NAD(+)-binding site is contributed by 230 to 233 (GVAT). Position 246 (leucine 246) interacts with K(+). Glutamate 252 acts as the Proton acceptor in catalysis. NAD(+) is bound by residues glycine 254, cysteine 286, and glutamate 387. The Nucleophile role is filled by cysteine 286. A Cysteine sulfenic acid (-SOH) modification is found at cysteine 286. K(+)-binding residues include lysine 457 and glycine 460. Residue glutamate 464 is the Charge relay system of the active site.

This sequence belongs to the aldehyde dehydrogenase family. In terms of assembly, dimer of dimers. K(+) serves as cofactor.

The enzyme catalyses betaine aldehyde + NAD(+) + H2O = glycine betaine + NADH + 2 H(+). It participates in amine and polyamine biosynthesis; betaine biosynthesis via choline pathway; betaine from betaine aldehyde: step 1/1. In terms of biological role, involved in the biosynthesis of the osmoprotectant glycine betaine. Catalyzes the irreversible oxidation of betaine aldehyde to the corresponding acid. This is Betaine aldehyde dehydrogenase from Stenotrophomonas maltophilia (strain K279a).